Reading from the N-terminus, the 269-residue chain is Mitochondrial acidic protein mam33 (269 aa).

This sequence belongs to the MAM33 family.

The protein resides in the cytoplasm. Its subcellular location is the mitochondrion matrix. This chain is Mitochondrial acidic protein mam33, found in Schizosaccharomyces pombe (strain 972 / ATCC 24843) (Fission yeast).